Consider the following 266-residue polypeptide: Enoyl-CoA hydratase EchA19 (266 aa).

E120 is an active-site residue. Position 135 is an N6-succinyllysine (K135). E140 is an active-site residue. K142 is subject to N6-succinyllysine.

This sequence belongs to the enoyl-CoA hydratase/isomerase family. Homotrimer; substrate probably binds in elongated tunnels between the subunits. In terms of processing, succinylated in vitro at pH 8.1, succinylation reduces specific activity of the enzyme 5.5-fold; succinyl-CoA is a downstream by-product of cholesterol degradation. Can be de-succinylated in vitro by NAD-dependent protein deacylase (AC P9WGG3). Succinylation may be a negative feedback regulator of cholesterol metabolism.

The catalysed reaction is (22E)-3-oxochola-4,22-dien-24-oyl-CoA + H2O = (22R)-hydroxy-3-oxo-chol-4-ene-24-oyl-CoA. It functions in the pathway steroid metabolism; cholesterol degradation. In terms of biological role, degradation of the cholesterol side chain involves 3 multistep beta-oxidation cycles, this may be involved in the second cycle. Hydrates 3-OCDO-CoA ((22E)-3-oxo-chol-4,22-dien-24-oyl-CoA) to make (22R)-HOCO-CoA (3-oxo-chol-4-ene-(22R)-hydroxy-24-oyl-CoA). Also acts on octenoyl-CoA. Not active on (E)-3-OCDS-CoA ((E)-3-oxocholest-4,24-dien-26-oyl-CoA) or 3-OPDC-CoA (3-oxo-4,17-pregnadiene-20-carboxyl-CoA). Hydrates the same substrate as ChsH3, but the 2 enzymes make different stereoisomers of the product. In Mycobacterium tuberculosis (strain ATCC 25618 / H37Rv), this protein is Enoyl-CoA hydratase EchA19.